The sequence spans 397 residues: Putative gustatory receptor 85a (397 aa).

At 1–56 the chain is on the cytoplasmic side; that stretch reads MYSLIEAQLLGGKLVNRVMASLRRIIQRSLGYFCALNGILDFNTDIGTGNLRRYRV. Residues 57-77 form a helical membrane-spanning segment; sequence LFMYRLLHNFAVISLTLKFLF. The Extracellular segment spans residues 78–90; it reads DFTDHFKYIESST. Residues 91-111 form a helical membrane-spanning segment; that stretch reads LITVNFFTYFTLVFFALLSSM. The Cytoplasmic segment spans residues 112-151; sequence GSCYQWQNRILAVLKELKHQRDLSRHMGYRVPRSKQNSID. Residues 152-172 form a helical membrane-spanning segment; the sequence is YLLFALTVLLILRLSIHLATF. The Extracellular portion of the chain corresponds to 173-186; that stretch reads TLSARMGFNHPCNC. Residues 187 to 207 form a helical membrane-spanning segment; sequence FLPECMIFSMNYLLFAILAEI. At 208–268 the chain is on the cytoplasmic side; that stretch reads TRCWWSLQSG…RYVTLAYMAR (61 aa). Residues 269–289 form a helical membrane-spanning segment; the sequence is NLWSGIVAGYLLVRFVIGNGL. At 290 to 293 the chain is on the extracellular side; the sequence is QDVE. The helical transmembrane segment at 294 to 314 threads the bilayer; the sequence is LVYLVFSFITCIQPLMLSLLV. Residues 315 to 375 are Cytoplasmic-facing; it reads NSMTSTTGSL…FRINRSLAFR (61 aa). The helical transmembrane segment at 376 to 396 threads the bilayer; that stretch reads SASLILVHVLYMVQSDYISIT. Position 397 (Asn397) is a topological domain, extracellular.

Belongs to the insect chemoreceptor superfamily. Gustatory receptor (GR) family. Gr22e subfamily.

It localises to the cell membrane. Functionally, probable gustatory receptor which mediates acceptance or avoidance behavior, depending on its substrates. The protein is Putative gustatory receptor 85a (Gr85a) of Drosophila melanogaster (Fruit fly).